Consider the following 258-residue polypeptide: Proteasome subunit beta type-1 (258 aa).

This sequence belongs to the peptidase T1B family. In terms of assembly, the 26S proteasome consists of a 20S proteasome core and two 19S regulatory subunits. The 20S proteasome core is composed of 28 subunits that are arranged in four stacked rings, resulting in a barrel-shaped structure. The two end rings are each formed by seven alpha subunits, and the two central rings are each formed by seven beta subunits. The catalytic chamber with the active sites is on the inside of the barrel.

The protein resides in the cytoplasm. The protein localises to the nucleus. Functionally, non-catalytic component of the proteasome, a multicatalytic proteinase complex which is characterized by its ability to cleave peptides with Arg, Phe, Tyr, Leu, and Glu adjacent to the leaving group at neutral or slightly basic pH. The proteasome has an ATP-dependent proteolytic activity. The sequence is that of Proteasome subunit beta type-1 (pbs-6) from Caenorhabditis elegans.